Consider the following 213-residue polypeptide: Large ribosomal subunit protein uL1 (213 aa).

This sequence belongs to the universal ribosomal protein uL1 family.

The sequence is that of Large ribosomal subunit protein uL1 (RPL10A) from Chlamydomonas reinhardtii (Chlamydomonas smithii).